The sequence spans 175 residues: ATP synthase subunit b 2 (175 aa).

The chain crosses the membrane as a helical span at residues 20 to 40 (LIFWTTITFVLVLIILKKIAW).

It belongs to the ATPase B chain family. As to quaternary structure, F-type ATPases have 2 components, F(1) - the catalytic core - and F(0) - the membrane proton channel. F(1) has five subunits: alpha(3), beta(3), gamma(1), delta(1), epsilon(1). F(0) has four main subunits: a(1), b(2) and c(10-14). The alpha and beta chains form an alternating ring which encloses part of the gamma chain. F(1) is attached to F(0) by a central stalk formed by the gamma and epsilon chains, while a peripheral stalk is formed by the delta and b chains.

The protein localises to the cell inner membrane. Functionally, f(1)F(0) ATP synthase produces ATP from ADP in the presence of a proton or sodium gradient. F-type ATPases consist of two structural domains, F(1) containing the extramembraneous catalytic core and F(0) containing the membrane proton channel, linked together by a central stalk and a peripheral stalk. During catalysis, ATP synthesis in the catalytic domain of F(1) is coupled via a rotary mechanism of the central stalk subunits to proton translocation. Component of the F(0) channel, it forms part of the peripheral stalk, linking F(1) to F(0). In Chlorobium luteolum (strain DSM 273 / BCRC 81028 / 2530) (Pelodictyon luteolum), this protein is ATP synthase subunit b 2.